We begin with the raw amino-acid sequence, 427 residues long: Mannosylglucosylglycerate synthase (427 aa).

It belongs to the glycosyltransferase group 1 family. The cofactor is Co(2+). Mg(2+) is required as a cofactor. Requires Mn(2+) as cofactor. It depends on Ni(2+) as a cofactor.

The catalysed reaction is (2R)-2-O-(alpha-D-glucopyranosyl)-glycerate + GDP-alpha-D-mannose = (2R)-2-O-[alpha-D-mannopyranosyl-(1-&gt;2)-alpha-D-glucopyranosyl]-glycerate + GDP + H(+). Functionally, catalyzes the synthesis of mannosylglucosylglycerate (MGG) from glucosylglycerate (GG) and GDP-mannose. This is Mannosylglucosylglycerate synthase from Thermotoga maritima (strain ATCC 43589 / DSM 3109 / JCM 10099 / NBRC 100826 / MSB8).